Consider the following 381-residue polypeptide: Tafazzin (381 aa).

Topologically, residues 1–25 (MSFRDVLERGDEFLEAYPRRSPLWR) are mitochondrial intermembrane. The stretch at 26 to 47 (FLSYSTSLLTFGVSKLLLFTCY) is an intramembrane region. The Mitochondrial intermembrane segment spans residues 48–381 (NVKLNGFEKL…PEGKPKGKDD (334 aa)). The HXXXXD motif signature appears at 77–82 (HMSMVD). The tract at residues 215 to 232 (LEATKPPIVVPIFATGFE) is required for membrane insertion.

The protein belongs to the taffazin family.

Its subcellular location is the mitochondrion outer membrane. The protein resides in the mitochondrion inner membrane. The catalysed reaction is 1'-[1,2-diacyl-sn-glycero-3-phospho],3'-[1-acyl-sn-glycero-3-phospho]-glycerol + a 1,2-diacyl-sn-glycero-3-phosphocholine = a cardiolipin + a 1-acyl-sn-glycero-3-phosphocholine. It carries out the reaction 1,2-di-(9Z,12Z-octadecadienoyl)-sn-glycero-3-phosphocholine + 1'-[1,2-di-(9Z,12Z-octadecadienoyl)-sn-glycero-3-phospho]-3'-[1-(9Z,12Z-octadecadienoyl)-sn-glycero-3-phospho]-glycerol = 1-(9Z,12Z)-octadecadienoyl-sn-glycero-3-phosphocholine + 1',3'-bis-[1,2-di-(9Z,12Z-octadecadienoyl)-sn-glycero-3-phospho]-glycerol. The enzyme catalyses 1'-[1,2-di-(9Z-octadecenoyl)-sn-glycero-3-phospho]-3'-[1-(9Z-octadecenoyl)-2-hexadecanoyl-sn-glycero-3-phospho]-glycerol + 1-hexadecanoyl-sn-glycero-3-phosphocholine = 1'-[1,2-di-(9Z-octadecenoyl)-sn-glycero-3-phospho]-3'-[1-(9Z-octadecenoyl)-sn-glycero-3-phospho]-glycerol + 1,2-dihexadecanoyl-sn-glycero-3-phosphocholine. It catalyses the reaction 1'-[1,2-di-(9Z-octadecenoyl)-sn-glycero-3-phospho]-3'-[1-(9Z-octadecenoyl)-2-(9Z-hexadecenoyl)-sn-glycero-3-phospho]-glycerol + 1-(9Z-hexadecenoyl)-sn-glycero-3-phosphocholine = 1,2-di-(9Z-hexadecenoyl)-sn-glycero-3-phosphocholine + 1'-[1,2-di-(9Z-octadecenoyl)-sn-glycero-3-phospho]-3'-[1-(9Z-octadecenoyl)-sn-glycero-3-phospho]-glycerol. The catalysed reaction is 1',3'-bis[1,2-di-(9Z-octadecenoyl)-sn-glycero-3-phospho]-glycerol + 1-(9Z-octadecenoyl)-sn-glycero-3-phosphocholine = 1'-[1,2-di-(9Z-octadecenoyl)-sn-glycero-3-phospho]-3'-[1-(9Z-octadecenoyl)-sn-glycero-3-phospho]-glycerol + 1,2-di-(9Z-octadecenoyl)-sn-glycero-3-phosphocholine. It carries out the reaction 1'-[1,2-di-(9Z-octadecenoyl)-sn-glycero-3-phospho]-3'-[1-(9Z-octadecenoyl)-2-(9Z,12Z-octadecadienoyl)-sn-glycero-3-phospho]-glycerol + 1-(9Z,12Z)-octadecadienoyl-sn-glycero-3-phosphocholine = 1,2-di-(9Z,12Z-octadecadienoyl)-sn-glycero-3-phosphocholine + 1'-[1,2-di-(9Z-octadecenoyl)-sn-glycero-3-phospho]-3'-[1-(9Z-octadecenoyl)-sn-glycero-3-phospho]-glycerol. The enzyme catalyses 1'-[1,2-di-(9Z-octadecenoyl)-sn-glycero-3-phospho]-3'-[1-(9Z-octadecenoyl)-2-(9Z-hexadecenoyl)-sn-glycero-3-phospho]-glycerol + 1-hexadecanoyl-sn-glycero-3-phosphocholine = 1-hexadecanoyl-2-(9Z-hexadecenoyl)-sn-glycero-3-phosphocholine + 1'-[1,2-di-(9Z-octadecenoyl)-sn-glycero-3-phospho]-3'-[1-(9Z-octadecenoyl)-sn-glycero-3-phospho]-glycerol. It catalyses the reaction 1'-[1,2-di-(9Z-octadecenoyl)-sn-glycero-3-phospho]-3'-[1-(9Z-octadecenoyl)-2-hexadecanoyl-sn-glycero-3-phospho]-glycerol + 1-(9Z-hexadecenoyl)-sn-glycero-3-phosphocholine = 1-(9Z-hexadecenoyl)-2-hexadecanoyl-sn-glycero-3-phosphocholine + 1'-[1,2-di-(9Z-octadecenoyl)-sn-glycero-3-phospho]-3'-[1-(9Z-octadecenoyl)-sn-glycero-3-phospho]-glycerol. The catalysed reaction is 2 1'-[1,2-diacyl-sn-glycero-3-phospho],3'-[1-acyl-sn-glycero-3-phospho]-glycerol = 1',3'-bis-[1-acyl-sn-glycero-3-phospho]-glycerol + a cardiolipin. It carries out the reaction 2 1'-[1,2-di-(9Z-octadecenoyl)-sn-glycero-3-phospho]-3'-[1-(9Z-octadecenoyl)-sn-glycero-3-phospho]-glycerol = 1',3'-bis-[1-(9Z-octadecenoyl)-sn-glycero-3-phospho]-glycerol + 1',3'-bis[1,2-di-(9Z-octadecenoyl)-sn-glycero-3-phospho]-glycerol. The enzyme catalyses 1,2-di-(9Z-hexadecenoyl)-sn-glycero-3-phosphocholine + 1-hexadecanoyl-sn-glycero-3-phosphocholine = 1-hexadecanoyl-2-(9Z-hexadecenoyl)-sn-glycero-3-phosphocholine + 1-(9Z-hexadecenoyl)-sn-glycero-3-phosphocholine. It catalyses the reaction 1'-[1,2-di-(9Z,12Z-octadecadienoyl)-sn-glycero-3-phospho]-3'-[1-(9Z,12Z-octadecadienoyl)-sn-glycero-3-phospho]-glycerol + 1,2-di-(9Z-octadecenoyl)-sn-glycero-3-phosphocholine = 1'-[1,2-di-(9Z,12Z-octadecadienoyl)-sn-glycero-3-phospho]-3'-[1-(9Z,12Z-octadecadienoyl)-2-(9Z-octadecenoyl)-sn-glycero-3-phospho]-glycerol + 1-(9Z-octadecenoyl)-sn-glycero-3-phosphocholine. The protein operates within phospholipid metabolism. In terms of biological role, acyltransferase required to remodel newly synthesized phospholipid cardiolipin (1',3'-bis-[1,2-diacyl-sn-glycero-3-phospho]-glycerol or CL), a key component of the mitochondrial inner membrane, with tissue specific acyl chains necessary for adequate mitochondrial function. Its role in cellular physiology is to improve mitochondrial performance. CL is critical for the coassembly of lipids and proteins in mitochondrial membranes, for instance, remodeling of the acyl groups of CL in the mitochondrial inner membrane affects the assembly and stability of respiratory chain complex IV and its supercomplex forms. Catalyzes the transacylation between phospholipids and lysophospholipids, with the highest rate being between phosphatidylcholine (1,2-diacyl-sn-glycero-3-phosphocholine or PC) and CL. Catalyzes both 1-acyl-sn-glycero-3-phosphocholine (lysophosphatidylcholine or LPC) reacylation and PC-CL transacylation, that means, it exchanges acyl groups between CL and PC by a combination of forward and reverse transacylations. Also catalyzes transacylations between other phospholipids such as phosphatidylethanolamine (1,2-diacyl-sn-glycero-3-phosphoethanolamine or PE) and CL, between PC and PE, and between PC and phosphatidate (1,2-diacyl-sn-glycero-3-phosphate or PA), although at lower rate. Not regiospecific, it transfers acyl groups into any of the sn-1 and sn-2 positions of the monolysocardiolipin (MLCL), which is an important prerequisite for uniformity and symmetry in CL acyl distribution. Cannot transacylate dilysocardiolipin (DLCL), thus, the role of MLCL is limited to that of an acyl acceptor. CoA-independent, it can reshuffle molecular species within a single phospholipid class. Redistributes fatty acids between MLCL, CL, and other lipids, which prolongs the half-life of CL. Its action is completely reversible, which allows for cyclic changes, such as fission and fusion or bending and flattening of the membrane. Hence, by contributing to the flexibility of the lipid composition, it plays an important role in the dynamics of mitochondria membranes. Essential for the final stage of spermatogenesis, spermatid individualization. Required for the initiation of mitophagy. The sequence is that of Tafazzin (TAZ1) from Saccharomyces cerevisiae (strain ATCC 204508 / S288c) (Baker's yeast).